The chain runs to 65 residues: Temporin-SN1 (65 aa).

A signal peptide spans 1 to 22 (MFTTKKSLLLLFFLGTINLSLC). A propeptide spans 23–44 (QEERNAEEERRDGDDEGGVEVQ) (removed in mature form). Lys-65 carries the lysine amide modification.

This sequence belongs to the frog skin active peptide (FSAP) family. Temporin subfamily. In terms of tissue distribution, expressed by the skin glands.

It is found in the secreted. Functionally, antimicrobial peptide. Active against a variety of Gram-positive bacterial strains. Not active against Gram-negative bacteria and against fungi. Shows hemolytic activity against human erythrocytes. This chain is Temporin-SN1, found in Sylvirana spinulosa (Fine-spined frog).